The sequence spans 307 residues: Cuticle collagen 36 (307 aa).

2 disordered regions span residues 76 to 102 (TRSR…GGPT) and 116 to 307 (QQGP…PPGY). The segment covering 86-102 (EGSGSGGSGSGGYGGPT) has biased composition (gly residues). 6 triple-helical region regions span residues 89 to 105 (GSGG…TGAG), 118 to 150 (GPAG…EGSI), 167 to 187 (GPQG…KGKS), 194 to 226 (GKNG…PGRV), 231 to 257 (GAAG…AGLT), and 260 to 295 (GGQG…EGSC). Pro residues predominate over residues 157–168 (PSEPCIICPPGP). The segment covering 186–196 (KSQERAADGKN) has biased composition (basic and acidic residues). Residues 202–220 (IGPPGPPGGVGEPGPPGPA) show a composition bias toward pro residues. Low complexity predominate over residues 231 to 242 (GAAGPAGPRGVK). The segment covering 258–278 (EIGGQGPPGDAGGPGPVGGQG) has biased composition (gly residues). Pro residues predominate over residues 279 to 288 (PPGPQGPQGP).

This sequence belongs to the cuticular collagen family. As to quaternary structure, collagen polypeptide chains are complexed within the cuticle by disulfide bonds and other types of covalent cross-links.

In terms of biological role, nematode cuticles are composed largely of collagen-like proteins. The cuticle functions both as an exoskeleton and as a barrier to protect the worm from its environment. This Caenorhabditis elegans protein is Cuticle collagen 36 (col-36).